Here is a 311-residue protein sequence, read N- to C-terminus: Peptide methionine sulfoxide reductase MsrA/MsrB 2 (311 aa).

Residues 1–155 (MHEIYLAGGC…PNGYCHINVN (155 aa)) form a peptide methionine sulfoxide reductase A region. Cys10 is an active-site residue. The MsrB domain maps to 172-295 (DEELKKTLSP…NSLSIRFIPK (124 aa)). The active-site Nucleophile is the Cys284.

The protein in the N-terminal section; belongs to the MsrA Met sulfoxide reductase family. In the C-terminal section; belongs to the MsrB Met sulfoxide reductase family.

It catalyses the reaction L-methionyl-[protein] + [thioredoxin]-disulfide + H2O = L-methionyl-(S)-S-oxide-[protein] + [thioredoxin]-dithiol. The enzyme catalyses [thioredoxin]-disulfide + L-methionine + H2O = L-methionine (S)-S-oxide + [thioredoxin]-dithiol. The catalysed reaction is L-methionyl-[protein] + [thioredoxin]-disulfide + H2O = L-methionyl-(R)-S-oxide-[protein] + [thioredoxin]-dithiol. Has an important function as a repair enzyme for proteins that have been inactivated by oxidation. Catalyzes the reversible oxidation-reduction of methionine sulfoxide in proteins to methionine. The protein is Peptide methionine sulfoxide reductase MsrA/MsrB 2 (msrAB2) of Streptococcus pneumoniae serotype 4 (strain ATCC BAA-334 / TIGR4).